The following is a 340-amino-acid chain: CRISPR system Cmr subunit Cmr6 (340 aa).

The protein belongs to the CRISPR system Cmr6 family. Part of the type III-B Cmr ribonucleoprotein (RNP) complex, an elongated RNP with Cmr2 and Cmr3 as the base, with Cmr4 and Cmr5 forming a helical core along the mature crRNA (39 or 45 nt in length), while the complex is capped by Cmr6 and Cmr1. The 5' end of the crRNA is bound to Cmr2 and Cmr3, while Cmr6 and a Cmr1 subunit (Cmr1-1 or Cmr1-2) cap the 3' end of the crRNA. The target RNA lies antiparallel to the crRNA, with its 5' end near Cmr1 and Cmr6 and its 3' end near Cmr2 and Cmr3; major target cleavage occurs nears the junction of Cmr1/Cmr6 and Cmr4/Cmr, with minor cleavage occurring at 6 nt intervals which coincide with the proposed spacing of Cmr4 subunits. Interacts with Cmr4 and Cmr5.

Its subcellular location is the cytoplasm. Its function is as follows. CRISPR (clustered regularly interspaced short palindromic repeat), is an adaptive immune system that provides protection against mobile genetic elements (viruses, transposable elements and conjugative plasmids). CRISPR clusters contain sequences complementary to antecedent mobile elements and target invading nucleic acids. CRISPR clusters are transcribed and processed into CRISPR RNA (crRNA), formerly called psiRNA (prokaryotic silencing) in this organism. Part of the Cmr ribonucleoprotein complex which has divalent cation-dependent endoribonuclease activity specific for ssRNA complementary to the crRNA (target RNA), generating 5' hydroxy- and 3' phosphate or 2'-3' cyclic phosphate termini. Cmr4 is probably the subunit that cleaves target RNA. Cmr complex does not cleave ssDNA complementary to the crRNA. Cleavage of invading RNA is guided by the crRNA; substrate cleavage occurs a fixed distance (14 nt) from the 3' end of the crRNA. In vitro reconstitution shows Cmr1-2 and Cmr5 are not absolutely necessary for target cleavage. This chain is CRISPR system Cmr subunit Cmr6, found in Pyrococcus furiosus (strain ATCC 43587 / DSM 3638 / JCM 8422 / Vc1).